Here is a 658-residue protein sequence, read N- to C-terminus: Protein kinase and PP2C-like domain-containing protein (658 aa).

The Protein kinase domain maps to Phe-30–Ile-314. ATP contacts are provided by residues Ile-36–Val-44 and Lys-57. Catalysis depends on Asp-149, which acts as the Proton acceptor. A PPM-type phosphatase domain is found at Ser-392–Leu-648. Mn(2+) is bound by residues Asp-428, Gly-429, Asp-599, and Asp-639.

In the N-terminal section; belongs to the protein kinase superfamily. Ser/Thr protein kinase family. This sequence in the C-terminal section; belongs to the PP2C family. The cofactor is Mg(2+). Mn(2+) is required as a cofactor.

It carries out the reaction L-seryl-[protein] + ATP = O-phospho-L-seryl-[protein] + ADP + H(+). The catalysed reaction is L-threonyl-[protein] + ATP = O-phospho-L-threonyl-[protein] + ADP + H(+). It catalyses the reaction O-phospho-L-seryl-[protein] + H2O = L-seryl-[protein] + phosphate. The enzyme catalyses O-phospho-L-threonyl-[protein] + H2O = L-threonyl-[protein] + phosphate. This Arabidopsis thaliana (Mouse-ear cress) protein is Protein kinase and PP2C-like domain-containing protein.